A 1101-amino-acid polypeptide reads, in one-letter code: MPKRTDLKSVLVIGSGPIVIGQAAEFDYSGTQAIRVLKEEGVRVVLVNSNPATIMTDPELADATYVEPITPAVVAKIIEKERPDALLPTLGGQTALNTAIALDKDGVLERFGVELIGANIEAIELGENRELFKGVVERAGGESARSHIVHTMEEALAAVEDLKYPVVVRPSFTMGGLGSGMAYDEADLYRICGAGLQYSPTSEVLLEESILGWKEYELEMMRDKNDNVVVVCSIENVDPVGVHTGDSITVAPAMTLTDREYQKLRDISINVIREVGVDTGGCNIQFAVNPVDGRVVVIEMNPRVSRSSALASKATGFAIAKIATKLALGYTMDEIPNDITQKTPASFEPVLDYVVVKVPRFAFEKFPAADPTLTTTMKSVGEAMAIGRNFTEALQKALRSLEQKGSELAFPQDADPQALLAAASTATTDRLSQTQQALYAGATIEEAFEATAIDPWFLDQFVLINEVADEIRDAEVLDEALLRRAKRHGFSDAQIGSLRHMDAAVVRGVRHALGVRPVYKTVDTCAAEFEAFTPYRYSSYDLETEVAPHEGESVIILGSGPNRIGQGIEFDYSCVHATMALREAGYETVMVNCNPETVSTDYDISDRLYFEPLTLEDVLEVIAAEEASGGVRGVFVQLGGQTPLKLAQQLADAGVPILGTSPAAIDLAEHRGEFALVLERAGLVAPKNGTAVSFDDAKRVADEIGYPVLVRPSYVLGGRGMEIVYSEEALAHYVAHATEITPDQPMLVDRFLEDAIEIDVDALYDGTELYLGGVMEHIEEAGIHSGDSACVLPPVTLGPDVLERVHRATERIAAGVGVRGLINIQFALASDVLYVIEANPRASRTVPFVSKATGVQLAKAAARIGVGESIADLRAAGMLPTAYDGGTLPIGAPVAVKEAVLPFTRFRTAEGRVVDSLLGPEMRSTGEVMGIDKHFDTAFAKSQSAAGGPLPTSGRVFVSVANRDKRTLVGQAKRLVDLGFQVVSTGGTAEVLRRNGIPAEVVAKIADAGHEDGAGTVLEQLHAGTVDLVLNTPSGGDARTDGYEIRAAATSLGVPVITTTAEFGACLQAIEAMRSYEWSVTSLQEHDARLQQAVAGPEAAA.

The interval 1 to 402 (MPKRTDLKSV…ALQKALRSLE (402 aa)) is carboxyphosphate synthetic domain. ATP contacts are provided by Arg129, Arg169, Gly175, Gly176, Glu208, Ile210, Glu215, Gly241, Val242, His243, Gln285, and Glu299. The 196-residue stretch at 133–328 (KGVVERAGGE…IAKIATKLAL (196 aa)) folds into the ATP-grasp 1 domain. Mg(2+) contacts are provided by Gln285, Glu299, and Asn301. 3 residues coordinate Mn(2+): Gln285, Glu299, and Asn301. Residues 403 to 544 (QKGSELAFPQ…YRYSSYDLET (142 aa)) are oligomerization domain. The segment at 545-947 (EVAPHEGESV…AFAKSQSAAG (403 aa)) is carbamoyl phosphate synthetic domain. Positions 675-866 (ALVLERAGLV…LAKAAARIGV (192 aa)) constitute an ATP-grasp 2 domain. Positions 711, 750, 752, 757, 782, 783, 784, 785, 825, and 837 each coordinate ATP. Residues Gln825, Glu837, and Asn839 each coordinate Mg(2+). Positions 825, 837, and 839 each coordinate Mn(2+). Residues 948 to 1093 (GPLPTSGRVF…QEHDARLQQA (146 aa)) form the MGS-like domain. An allosteric domain region spans residues 948–1101 (GPLPTSGRVF…QAVAGPEAAA (154 aa)).

This sequence belongs to the CarB family. As to quaternary structure, composed of two chains; the small (or glutamine) chain promotes the hydrolysis of glutamine to ammonia, which is used by the large (or ammonia) chain to synthesize carbamoyl phosphate. Tetramer of heterodimers (alpha,beta)4. Mg(2+) serves as cofactor. The cofactor is Mn(2+).

The enzyme catalyses hydrogencarbonate + L-glutamine + 2 ATP + H2O = carbamoyl phosphate + L-glutamate + 2 ADP + phosphate + 2 H(+). It carries out the reaction hydrogencarbonate + NH4(+) + 2 ATP = carbamoyl phosphate + 2 ADP + phosphate + 2 H(+). The protein operates within amino-acid biosynthesis; L-arginine biosynthesis; carbamoyl phosphate from bicarbonate: step 1/1. It functions in the pathway pyrimidine metabolism; UMP biosynthesis via de novo pathway; (S)-dihydroorotate from bicarbonate: step 1/3. Large subunit of the glutamine-dependent carbamoyl phosphate synthetase (CPSase). CPSase catalyzes the formation of carbamoyl phosphate from the ammonia moiety of glutamine, carbonate, and phosphate donated by ATP, constituting the first step of 2 biosynthetic pathways, one leading to arginine and/or urea and the other to pyrimidine nucleotides. The large subunit (synthetase) binds the substrates ammonia (free or transferred from glutamine from the small subunit), hydrogencarbonate and ATP and carries out an ATP-coupled ligase reaction, activating hydrogencarbonate by forming carboxy phosphate which reacts with ammonia to form carbamoyl phosphate. This chain is Carbamoyl phosphate synthase large chain, found in Micrococcus luteus (strain ATCC 4698 / DSM 20030 / JCM 1464 / CCM 169 / CCUG 5858 / IAM 1056 / NBRC 3333 / NCIMB 9278 / NCTC 2665 / VKM Ac-2230) (Micrococcus lysodeikticus).